The sequence spans 1304 residues: DNA-directed RNA polymerase subunit beta' (1304 aa).

Residues Cys60, Cys62, Cys75, and Cys78 each coordinate Zn(2+). Mg(2+)-binding residues include Asp541, Asp543, and Asp545. Positions 887, 963, 970, and 973 each coordinate Zn(2+).

This sequence belongs to the RNA polymerase beta' chain family. The RNAP catalytic core consists of 2 alpha, 1 beta, 1 beta' and 1 omega subunit. When a sigma factor is associated with the core the holoenzyme is formed, which can initiate transcription. Mg(2+) is required as a cofactor. Requires Zn(2+) as cofactor.

It catalyses the reaction RNA(n) + a ribonucleoside 5'-triphosphate = RNA(n+1) + diphosphate. In terms of biological role, DNA-dependent RNA polymerase catalyzes the transcription of DNA into RNA using the four ribonucleoside triphosphates as substrates. The polypeptide is DNA-directed RNA polymerase subunit beta' (Acidothermus cellulolyticus (strain ATCC 43068 / DSM 8971 / 11B)).